We begin with the raw amino-acid sequence, 142 residues long: Protein archease (142 aa).

Residues Asp12, Asp141, and Ile142 each coordinate Ca(2+).

Belongs to the archease family. As to quaternary structure, in solution, exists as a monomer, trimer and hexamer. Oligomeric states form a tripartite complex with tRNA and PAB1947 methyltransferase.

Its function is as follows. Activates the tRNA-splicing ligase complex by facilitating the enzymatic turnover of catalytic subunit RtcB. Acts by promoting the guanylylation of RtcB, a key intermediate step in tRNA ligation. Can also alter the NTP specificity of RtcB such that ATP, dGTP or ITP is used efficiently. Chaperone or modulator of proteins involved in DNA or RNA processing. Protects the tRNA (cytosine-5-)-methyltransferase PAB1947 against aggregation and increases its specificity. The polypeptide is Protein archease (Pyrococcus abyssi (strain GE5 / Orsay)).